The primary structure comprises 255 residues: 3-deoxy-manno-octulosonate cytidylyltransferase (255 aa).

This sequence belongs to the KdsB family.

It localises to the cytoplasm. It catalyses the reaction 3-deoxy-alpha-D-manno-oct-2-ulosonate + CTP = CMP-3-deoxy-beta-D-manno-octulosonate + diphosphate. Its pathway is nucleotide-sugar biosynthesis; CMP-3-deoxy-D-manno-octulosonate biosynthesis; CMP-3-deoxy-D-manno-octulosonate from 3-deoxy-D-manno-octulosonate and CTP: step 1/1. The protein operates within bacterial outer membrane biogenesis; lipopolysaccharide biosynthesis. In terms of biological role, activates KDO (a required 8-carbon sugar) for incorporation into bacterial lipopolysaccharide in Gram-negative bacteria. The protein is 3-deoxy-manno-octulosonate cytidylyltransferase of Xanthobacter autotrophicus (strain ATCC BAA-1158 / Py2).